The sequence spans 528 residues: Na(+)/H(+) antiporter NhaB (528 aa).

Transmembrane regions (helical) follow at residues F23 to W45, P66 to L86, V95 to Y115, V130 to I164, L203 to P223, I241 to V261, L310 to I330, E349 to I369, L390 to G410, A448 to I468, and M475 to E495.

Belongs to the NhaB Na(+)/H(+) (TC 2.A.34) antiporter family.

It is found in the cell inner membrane. The catalysed reaction is 2 Na(+)(in) + 3 H(+)(out) = 2 Na(+)(out) + 3 H(+)(in). In terms of biological role, na(+)/H(+) antiporter that extrudes sodium in exchange for external protons. The protein is Na(+)/H(+) antiporter NhaB of Shewanella amazonensis (strain ATCC BAA-1098 / SB2B).